A 98-amino-acid polypeptide reads, in one-letter code: NADH-ubiquinone oxidoreductase chain 4L (98 aa).

The next 3 membrane-spanning stretches (helical) occupy residues 1–21, 29–49, and 58–78; these read MPLIYMNITLAFTMSLLGMLV, SLLCLEGMMLSLFIMITLMTL, and IMPITMLVFAACEAAVGLALL.

The protein belongs to the complex I subunit 4L family. Core subunit of respiratory chain NADH dehydrogenase (Complex I) which is composed of 45 different subunits.

The protein localises to the mitochondrion inner membrane. It carries out the reaction a ubiquinone + NADH + 5 H(+)(in) = a ubiquinol + NAD(+) + 4 H(+)(out). Its function is as follows. Core subunit of the mitochondrial membrane respiratory chain NADH dehydrogenase (Complex I) which catalyzes electron transfer from NADH through the respiratory chain, using ubiquinone as an electron acceptor. Part of the enzyme membrane arm which is embedded in the lipid bilayer and involved in proton translocation. The sequence is that of NADH-ubiquinone oxidoreductase chain 4L (MT-ND4L) from Pongo abelii (Sumatran orangutan).